The chain runs to 290 residues: Alpha-1,2-colitosyltransferase (290 aa).

Belongs to the glycosyltransferase 11 family. It depends on Does not require a metal cofactor. as a cofactor.

It carries out the reaction GDP-beta-L-colitose + beta-D-galactosyl-(1-&gt;3)-N-acetyl-D-glucosamine = alpha-L-colitosyl-(1-&gt;2)-beta-D-galactosyl-(1-&gt;3)-N-acetyl-D-glucosamine + GDP + H(+). It functions in the pathway bacterial outer membrane biogenesis; LPS O-antigen biosynthesis. Its activity is regulated as follows. Addition of metal ions dramatically decreases the activity to 0-40%. Involved in the biosynthesis of the lipopolysaccharide (LPS) O-antigen region. Catalyzes the transfer of colitose from GDP-colitose to the galactose residue of beta-Gal-(1-&gt;3)-GlcNAc (lacto-N-biose) via an alpha1,2-linkage. Is specific for beta-Gal-(1-&gt;3)-GlcNAc, but can use GDP-L-fucose as the sugar donor with almost the same efficiency as GDP-L-colitose. This Escherichia coli protein is Alpha-1,2-colitosyltransferase.